The following is a 243-amino-acid chain: Small ribosomal subunit protein uS3 (243 aa).

The KH type-2 domain occupies 38–106 (IRKYLNARLA…DIQINIFEVK (69 aa)). The disordered stretch occupies residues 214–243 (PNFTQSKESGRGNNGGNNGGKNFKRKKNNR).

It belongs to the universal ribosomal protein uS3 family. As to quaternary structure, part of the 30S ribosomal subunit. Forms a tight complex with proteins S10 and S14.

Binds the lower part of the 30S subunit head. Binds mRNA in the 70S ribosome, positioning it for translation. The polypeptide is Small ribosomal subunit protein uS3 (Bacteroides thetaiotaomicron (strain ATCC 29148 / DSM 2079 / JCM 5827 / CCUG 10774 / NCTC 10582 / VPI-5482 / E50)).